A 162-amino-acid chain; its full sequence is Phenazine biosynthesis protein PhzB 2 (162 aa).

Residue Thr-91 is modified to Phosphothreonine.

The protein belongs to the PhzA/PhzB family.

Functionally, involved in the biosynthesis of the antibiotic phenazine, a nitrogen-containing heterocyclic molecule having important roles in virulence, competition and biological control. This is Phenazine biosynthesis protein PhzB 2 (phzB2) from Pseudomonas aeruginosa (strain UCBPP-PA14).